Here is an 893-residue protein sequence, read N- to C-terminus: Alanine--tRNA ligase (893 aa).

Zn(2+) contacts are provided by His-574, His-578, Cys-678, and His-682.

The protein belongs to the class-II aminoacyl-tRNA synthetase family. Requires Zn(2+) as cofactor.

Its subcellular location is the cytoplasm. It catalyses the reaction tRNA(Ala) + L-alanine + ATP = L-alanyl-tRNA(Ala) + AMP + diphosphate. In terms of biological role, catalyzes the attachment of alanine to tRNA(Ala) in a two-step reaction: alanine is first activated by ATP to form Ala-AMP and then transferred to the acceptor end of tRNA(Ala). Also edits incorrectly charged Ser-tRNA(Ala) and Gly-tRNA(Ala) via its editing domain. This chain is Alanine--tRNA ligase, found in Bifidobacterium longum (strain NCC 2705).